The following is a 97-amino-acid chain: Citrate lyase acyl carrier protein (97 aa).

The residue at position 14 (Ser-14) is an O-(phosphoribosyl dephospho-coenzyme A)serine.

It belongs to the CitD family. Oligomer with a subunit composition of (alpha,beta,gamma)6.

The protein resides in the cytoplasm. Its function is as follows. Covalent carrier of the coenzyme of citrate lyase. This chain is Citrate lyase acyl carrier protein, found in Klebsiella pneumoniae subsp. pneumoniae (strain ATCC 700721 / MGH 78578).